The following is a 218-amino-acid chain: MANSSSVYDWFQERLEIQDITDDVTSKYVPPHVNIFYCLGGITLVCFLIQFATGFAMTFYYKPTVTQAYSSVSYLMTDVSFGWLIRSVHRWSASMMVLMLILHVFRVYLTGGFKRPRELTWVTGVVMAVITVAFGVTGYSLPWDQVGYWAVKIVSGVPAAIPVIGDFMVELLRGGESVGQSTLTRFYSLHTFVLPWSLAVFMLMHFLMIRKQGISGPL.

The helical transmembrane segment at Ile35–Phe55 threads the bilayer. Cys38 provides a ligand contact to heme c. Residues His89 and His103 each contribute to the heme b site. The next 3 helical transmembrane spans lie at Ala93–Phe113, Leu119–Tyr139, and Leu189–Ile209. 2 residues coordinate heme b: His190 and His205.

This sequence belongs to the cytochrome b family. PetB subfamily. As to quaternary structure, the 4 large subunits of the cytochrome b6-f complex are cytochrome b6, subunit IV (17 kDa polypeptide, PetD), cytochrome f and the Rieske protein, while the 4 small subunits are PetG, PetL, PetM and PetN. The complex functions as a dimer. Heme b serves as cofactor. The cofactor is heme c.

The protein resides in the cellular thylakoid membrane. Component of the cytochrome b6-f complex, which mediates electron transfer between photosystem II (PSII) and photosystem I (PSI), cyclic electron flow around PSI, and state transitions. In Prochlorococcus marinus (strain MIT 9301), this protein is Cytochrome b6.